A 289-amino-acid polypeptide reads, in one-letter code: Ribosomal protein L11 methyltransferase (289 aa).

S-adenosyl-L-methionine is bound by residues Thr135, Gly156, Asp179, and Asn225.

Belongs to the methyltransferase superfamily. PrmA family.

The protein resides in the cytoplasm. The catalysed reaction is L-lysyl-[protein] + 3 S-adenosyl-L-methionine = N(6),N(6),N(6)-trimethyl-L-lysyl-[protein] + 3 S-adenosyl-L-homocysteine + 3 H(+). Its function is as follows. Methylates ribosomal protein L11. This Chlorobaculum parvum (strain DSM 263 / NCIMB 8327) (Chlorobium vibrioforme subsp. thiosulfatophilum) protein is Ribosomal protein L11 methyltransferase.